We begin with the raw amino-acid sequence, 338 residues long: Protein FosB (338 aa).

Disordered stretches follow at residues 1-54 and 80-179; these read MFQA…PGSF and AQSQ…RREL. Over residues 13–31 the composition is skewed to polar residues; the sequence is SRCSSSPSAESQYLSSVDS. Residue Ser27 is modified to Phosphoserine. The span at 123–137 shows a compositional bias: low complexity; sequence PSTSTSTSGPVSARP. A bZIP domain is found at 155–218; the sequence is EEKRRVRRER…ERLEFVLVAH (64 aa). The tract at residues 157–182 is basic motif; sequence KRRVRRERNKLAAAKCRNRRRELTDR. The interval 183–211 is leucine-zipper; it reads LQAETDQLEEEKAELESEIAELQKEKERL. Disordered stretches follow at residues 222–276 and 315–338; these read CKIP…PPNL and AGSQRTSGSEQPSDPLNSPSLLAL. The segment covering 256 to 265 has biased composition (pro residues); sequence LPPPPPPPLP. Residues 266–276 show a composition bias toward polar residues; it reads FQSSRDAPPNL.

The protein belongs to the bZIP family. Fos subfamily. Heterodimer; binds to DNA as heterodimer. Component of an AP-1 transcription factor complex; composed of FOS-JUN heterodimers. As part of the AP-1 transcription factor complex, forms heterodimers with JUN, JUNB or JUND, thereby binding to the AP-1 consensus sequence and stimulating transcription. In terms of processing, phosphorylated; phosphorylation is induced by chronic electroconvulsive seizure (ECS) treatment. In terms of tissue distribution, expressed in brain. Expressed in pyramidal cells in CA1 and CA3, in the dentate gyrus and the nucleus accumbens (at protein level).

Its subcellular location is the nucleus. In terms of biological role, heterodimerizes with proteins of the JUN family to form an AP-1 transcription factor complex, thereby enhancing their DNA binding activity to an AP-1 consensus sequence 5'-TGA[GC]TCA-3' and enhancing their transcriptional activity. Exhibits transactivation activity in vitro. As part of the AP-1 complex, facilitates enhancer selection together with cell-type-specific transcription factors by collaboratively binding to nucleosomal enhancers and recruiting the SWI/SNF (BAF) chromatin remodeling complex to establish accessible chromatin. Together with JUN, plays a role in activation-induced cell death of T cells by binding to the AP-1 promoter site of FASLG/CD95L, and inducing its transcription in response to activation of the TCR/CD3 signaling pathway. Involved in the display of nurturing behavior towards newborns. May play a role in neurogenesis in the hippocampus and in learning and memory-related tasks by regulating the expression of various genes involved in neurogenesis, depression and epilepsy. Implicated in behavioral responses related to morphine reward and spatial memory. This chain is Protein FosB, found in Rattus norvegicus (Rat).